The chain runs to 75 residues: uncharacterized protein (75 aa).

This is an uncharacterized protein from Saccharomyces cerevisiae (strain ATCC 204508 / S288c) (Baker's yeast).